A 247-amino-acid polypeptide reads, in one-letter code: Triosephosphate isomerase (247 aa).

8-10 (NWK) provides a ligand contact to substrate. The active-site Electrophile is H95. The Proton acceptor role is filled by E162. 2 residues coordinate substrate: G168 and S207.

The protein belongs to the triosephosphate isomerase family. As to quaternary structure, homodimer.

It is found in the cytoplasm. It carries out the reaction D-glyceraldehyde 3-phosphate = dihydroxyacetone phosphate. It participates in carbohydrate biosynthesis; gluconeogenesis. Its pathway is carbohydrate degradation; glycolysis; D-glyceraldehyde 3-phosphate from glycerone phosphate: step 1/1. Functionally, involved in the gluconeogenesis. Catalyzes stereospecifically the conversion of dihydroxyacetone phosphate (DHAP) to D-glyceraldehyde-3-phosphate (G3P). The protein is Triosephosphate isomerase of Gluconacetobacter diazotrophicus (strain ATCC 49037 / DSM 5601 / CCUG 37298 / CIP 103539 / LMG 7603 / PAl5).